Here is a 489-residue protein sequence, read N- to C-terminus: Rhamnulokinase (489 aa).

13 to 17 (ASSGR) provides a ligand contact to ATP. A disulfide bond links C68 and C222. Substrate is bound by residues G83 and 236 to 238 (HDT). Catalysis depends on D237, which acts as the Proton acceptor. T259 serves as a coordination point for ATP. Substrate is bound at residue N296. Q304 contacts ATP. Residues C353 and C370 are joined by a disulfide bond. Residue G402 participates in ATP binding. C413 and C417 form a disulfide bridge.

This sequence belongs to the rhamnulokinase family. Mg(2+) is required as a cofactor.

It carries out the reaction L-rhamnulose + ATP = L-rhamnulose 1-phosphate + ADP + H(+). Its pathway is carbohydrate degradation; L-rhamnose degradation; glycerone phosphate from L-rhamnose: step 2/3. Functionally, involved in the catabolism of L-rhamnose (6-deoxy-L-mannose). Catalyzes the transfer of the gamma-phosphate group from ATP to the 1-hydroxyl group of L-rhamnulose to yield L-rhamnulose 1-phosphate. The chain is Rhamnulokinase from Enterobacter sp. (strain 638).